Consider the following 79-residue polypeptide: Beta-hexatoxin-Mg1a (79 aa).

The N-terminal stretch at 1–20 is a signal peptide; the sequence is MKAPATTLILVMSLISVLWA. The propeptide occupies 21–50; sequence TPDLEEGDLLAELGDLIATDDEYPMKPEER. 3 cysteine pairs are disulfide-bonded: Cys-52–Cys-66, Cys-59–Cys-71, and Cys-65–Cys-76.

This sequence belongs to the neurotoxin 15 family. 01 (magi-5) subfamily. As to expression, expressed by the venom gland.

Its subcellular location is the secreted. Insect and vertebrate active toxin. Binds to site 4 of mammalian voltage-gated sodium channels and shifts the activation voltage of the mammalian Nav1.2a/SCN2A channel to more hyperpolarized voltages, whereas the insect channel, DmNav1 (para), is not affected. Competes for binding at site 3 of the insect sodium channel. Causes temporary paralysis when injected into lepidopteran larvae at 8.6 nmol/g. A low intracranial injection dose into mice causes lacrimation, closure of the eyes and sweating. A high injection dose causes extensive lacrimation and death. The polypeptide is Beta-hexatoxin-Mg1a (Macrothele gigas (Japanese funnel web spider)).